The chain runs to 610 residues: Aspartate--tRNA(Asp/Asn) ligase (610 aa).

Glu177 lines the L-aspartate pocket. Residues 201-204 (QLFK) are aspartate. Arg223 lines the L-aspartate pocket. ATP is bound by residues 223–225 (RDE) and Gln232. An L-aspartate-binding site is contributed by His461. Position 499 (Glu499) interacts with ATP. L-aspartate is bound at residue Arg506. 551–554 (GVDR) contributes to the ATP binding site.

This sequence belongs to the class-II aminoacyl-tRNA synthetase family. Type 1 subfamily. In terms of assembly, homodimer.

Its subcellular location is the cytoplasm. The catalysed reaction is tRNA(Asx) + L-aspartate + ATP = L-aspartyl-tRNA(Asx) + AMP + diphosphate. In terms of biological role, aspartyl-tRNA synthetase with relaxed tRNA specificity since it is able to aspartylate not only its cognate tRNA(Asp) but also tRNA(Asn). Reaction proceeds in two steps: L-aspartate is first activated by ATP to form Asp-AMP and then transferred to the acceptor end of tRNA(Asp/Asn). The sequence is that of Aspartate--tRNA(Asp/Asn) ligase from Parasynechococcus marenigrum (strain WH8102).